Reading from the N-terminus, the 359-residue chain is 3-dehydroquinate synthase (359 aa).

NAD(+) contacts are provided by residues 70 to 75 (DGEQYK), 105 to 109 (GVIGD), 129 to 130 (TT), Lys142, Lys151, and 169 to 172 (FYKT). The Zn(2+) site is built by Glu184, His247, and His264.

Belongs to the sugar phosphate cyclases superfamily. Dehydroquinate synthase family. It depends on Co(2+) as a cofactor. Zn(2+) serves as cofactor. The cofactor is NAD(+).

The protein resides in the cytoplasm. It catalyses the reaction 7-phospho-2-dehydro-3-deoxy-D-arabino-heptonate = 3-dehydroquinate + phosphate. The protein operates within metabolic intermediate biosynthesis; chorismate biosynthesis; chorismate from D-erythrose 4-phosphate and phosphoenolpyruvate: step 2/7. Its function is as follows. Catalyzes the conversion of 3-deoxy-D-arabino-heptulosonate 7-phosphate (DAHP) to dehydroquinate (DHQ). The chain is 3-dehydroquinate synthase from Francisella tularensis subsp. holarctica (strain FTNF002-00 / FTA).